The chain runs to 618 residues: ELMO domain-containing protein C (618 aa).

Positions 1-72 form a coiled coil; the sequence is MERYRIRRER…EELRLQGDRF (72 aa). Disordered stretches follow at residues 153 to 175 and 245 to 276; these read NFDNNNNNNNNSNNNNNGNKPSL and TTTTTTTTTTTTTTTTTTTTTTTTTPTSSTTV. Composition is skewed to low complexity over residues 156-171 and 245-275; these read NNNNNNNNSNNNNNGN and TTTTTTTTTTTTTTTTTTTTTTTTTPTSSTT. The region spanning 382–545 is the ELMO domain; sequence DHEEYLKHLW…KLKSQLNEIS (164 aa). Composition is skewed to low complexity over residues 574–592 and 602–618; these read QQQQQLQQQQQSLPLPSSP and TTTSSTSISPSKNTQNN. Residues 574-618 form a disordered region; it reads QQQQQLQQQQQSLPLPSSPRSFLNNYQQTTTSSTSISPSKNTQNN.

The chain is ELMO domain-containing protein C (elmoC) from Dictyostelium discoideum (Social amoeba).